The following is a 465-amino-acid chain: Putative multidrug resistance protein MdtD (465 aa).

Helical transmembrane passes span 12–32, 49–69, 72–92, 102–124, 138–158, 165–185, 195–215, 219–239, 267–287, 290–310, 342–362, 393–413, and 430–450; these read LWIVAFGFFMQTLDTTIVNTA, SVIVSYVLTVAVMLPASGWLA, IGVKWVFFSAIILFTFGSLMC, ILSRVLQGVGGAMMVPVGRLTVM, FVTLPGQIGPLVGPALGGFLV, WIFLINLPVGVIGALATLLLM, FDISGFIMLAIGMATLTLALD, GLGLSPLAIAGLILCGVIALG, LVGSMSARIGSGMLPFMTPIF, IGLGFSPFHAGLMMIPMIIGS, LSLPLVAIMGWTLLMPVVLFF, LLSMAMQLSMSIGVSTAGILL, and SAFLYSYLCMAIIIALPALIF.

Belongs to the major facilitator superfamily. TCR/Tet family.

Its subcellular location is the cell inner membrane. The protein is Putative multidrug resistance protein MdtD of Yersinia pseudotuberculosis serotype O:1b (strain IP 31758).